A 102-amino-acid polypeptide reads, in one-letter code: Large ribosomal subunit protein uL24 (102 aa).

This sequence belongs to the universal ribosomal protein uL24 family. Part of the 50S ribosomal subunit.

Its function is as follows. One of two assembly initiator proteins, it binds directly to the 5'-end of the 23S rRNA, where it nucleates assembly of the 50S subunit. In terms of biological role, one of the proteins that surrounds the polypeptide exit tunnel on the outside of the subunit. In Polynucleobacter asymbioticus (strain DSM 18221 / CIP 109841 / QLW-P1DMWA-1) (Polynucleobacter necessarius subsp. asymbioticus), this protein is Large ribosomal subunit protein uL24.